The following is a 247-amino-acid chain: ABC-type transporter ATP-binding protein EcsA (247 aa).

Residues 4–234 (LSVKDLTGGY…FGMKDAALDD (231 aa)) form the ABC transporter domain. An ATP-binding site is contributed by 36–43 (GLNGAGKS).

Belongs to the ABC transporter superfamily.

Its function is as follows. Has a role in exoprotein production, sporulation and competence. The sequence is that of ABC-type transporter ATP-binding protein EcsA (ecsA) from Bacillus subtilis (strain 168).